The primary structure comprises 208 residues: ATP-dependent Clp protease proteolytic subunit (208 aa).

The active-site Nucleophile is serine 105. Histidine 130 is an active-site residue.

Belongs to the peptidase S14 family. Fourteen ClpP subunits assemble into 2 heptameric rings which stack back to back to give a disk-like structure with a central cavity, resembling the structure of eukaryotic proteasomes.

It is found in the cytoplasm. It catalyses the reaction Hydrolysis of proteins to small peptides in the presence of ATP and magnesium. alpha-casein is the usual test substrate. In the absence of ATP, only oligopeptides shorter than five residues are hydrolyzed (such as succinyl-Leu-Tyr-|-NHMec, and Leu-Tyr-Leu-|-Tyr-Trp, in which cleavage of the -Tyr-|-Leu- and -Tyr-|-Trp bonds also occurs).. Its function is as follows. Cleaves peptides in various proteins in a process that requires ATP hydrolysis. Has a chymotrypsin-like activity. Plays a major role in the degradation of misfolded proteins. The chain is ATP-dependent Clp protease proteolytic subunit from Xanthomonas campestris pv. campestris (strain 8004).